The chain runs to 689 residues: Glycine--tRNA ligase beta subunit (689 aa).

This sequence belongs to the class-II aminoacyl-tRNA synthetase family. As to quaternary structure, tetramer of two alpha and two beta subunits.

It is found in the cytoplasm. The enzyme catalyses tRNA(Gly) + glycine + ATP = glycyl-tRNA(Gly) + AMP + diphosphate. The protein is Glycine--tRNA ligase beta subunit of Shewanella baltica (strain OS195).